The sequence spans 123 residues: Probable ketoamine kinase in tonB 3'region (123 aa).

The active-site Proton acceptor is the Asp-26.

The protein belongs to the fructosamine kinase family.

In terms of biological role, ketoamine kinase that phosphorylates ketoamines on the third carbon of the sugar moiety to generate ketoamine 3-phosphate. This chain is Probable ketoamine kinase in tonB 3'region, found in Klebsiella pneumoniae.